Here is a 320-residue protein sequence, read N- to C-terminus: uncharacterized protein (320 aa).

The 120-residue stretch at 13–132 (ALVLKSLLRE…VLYPEIPSPE (120 aa)) folds into the Arf-GAP domain. The segment at 28 to 52 (CADCKRNEQPRWASWNLGVFICIRC) adopts a C4-type zinc-finger fold. 3 disordered regions span residues 153–212 (NTAS…STRQ), 227–261 (RPQV…YGAF), and 284–320 (NVTS…DVWK). A compositionally biased stretch (low complexity) spans 154–176 (TASRSSSAHSVKSTSSATVTNVT). Polar residues-rich tracts occupy residues 183–210 (SATT…APST) and 228–244 (PQVS…YQNL). Composition is skewed to low complexity over residues 245–257 (PSPV…SSQP) and 295–310 (SPVQ…SLDS).

It localises to the cytoplasm. It is found in the golgi apparatus. Its function is as follows. GTPase-activating protein for the ADP ribosylation factor family. This is an uncharacterized protein from Schizosaccharomyces pombe (strain 972 / ATCC 24843) (Fission yeast).